Here is a 261-residue protein sequence, read N- to C-terminus: uncharacterized protein (261 aa).

The N-terminal stretch at 1-22 is a signal peptide; the sequence is MRYLKKVTIYISLLILTIFIGG. The N-palmitoyl cysteine moiety is linked to residue cysteine 23. The S-diacylglycerol cysteine moiety is linked to residue cysteine 23.

It belongs to the staphylococcal tandem lipoprotein family.

Its subcellular location is the cell membrane. This is an uncharacterized protein from Staphylococcus epidermidis (strain ATCC 35984 / DSM 28319 / BCRC 17069 / CCUG 31568 / BM 3577 / RP62A).